A 436-amino-acid chain; its full sequence is Serine/threonine-protein kinase STK11 (436 aa).

Phosphoserine is present on serine 31. N6-acetyllysine is present on residues lysine 44 and lysine 48. The sufficient for interaction with SIRT1 stretch occupies residues 45–90 (LIGKYLMGDLLGEGSYGKVKEVLDSETLCRRAVKILKKKKLRRIPN). Positions 49 to 309 (YLMGDLLGEG…IRQIRQHSWF (261 aa)) constitute a Protein kinase domain. ATP contacts are provided by residues 55 to 63 (LGEGSYGKV) and lysine 78. 2 positions are modified to N6-acetyllysine: lysine 96 and lysine 97. Aspartate 176 serves as the catalytic Proton acceptor. A Phosphothreonine; by autocatalysis modification is found at threonine 189. Residues lysine 296 and lysine 311 each carry the N6-acetyllysine modification. A Phosphoserine modification is found at serine 325. Residue threonine 336 is modified to Phosphothreonine; by autocatalysis. Threonine 366 bears the Phosphothreonine; by ATM and autocatalysis mark. The disordered stretch occupies residues 398 to 421 (TEPQLSSKVKPEGRPGTANPARKV). The residue at position 403 (serine 403) is a Phosphoserine. Lysine 420 is modified (N6-acetyllysine). A lipid anchor (S-palmitoyl cysteine) is attached at cysteine 422. Lysine 426 carries the post-translational modification N6-acetyllysine. Serine 431 is subject to Phosphoserine; by autocatalysis, PKA, PKC/PRKCZ and RPS6KA1. Position 433 is a cysteine methyl ester (cysteine 433). Cysteine 433 is lipidated: S-farnesyl cysteine. Lysine 434 is modified (N6-acetyllysine). The propeptide at 434 to 436 (KQQ) is removed in mature form.

This sequence belongs to the protein kinase superfamily. CAMK Ser/Thr protein kinase family. LKB1 subfamily. As to quaternary structure, catalytic component of a trimeric complex composed of STK11/LKB1, STRAD (STRADA or STRADB) and CAB39/MO25 (CAB39/MO25alpha or CAB39L/MO25beta): the complex tethers STK11/LKB1 in the cytoplasm and stimulates its catalytic activity. Found in a ternary complex composed of SMAD4, STK11/LKB1 and STK11IP. Interacts with p53/TP53, SMAD4, STK11IP and WDR6. Interacts with NR4A1. Interacts with NISCH; this interaction may increase STK11 activity. Interacts with PTEN, leading to PTEN phosphorylation. Interacts with SIRT1; the interaction deacetylates STK11. Interacts with CDKN1A. Mg(2+) serves as cofactor. The cofactor is Mn(2+). In terms of processing, phosphorylated by ATM at Thr-366 following ionizing radiation (IR). Phosphorylation at Ser-431 by RPS6KA1 and/or some PKA is required to inhibit cell growth. Phosphorylation at Ser-431 is also required during neuronal polarization to mediate phosphorylation of BRSK1 and BRSK2. Phosphorylation by PKC/PRKCZ at Ser-399 in isoform 2 promotes metformin (or peroxynitrite)-induced nuclear export of STK11 and activation of AMPK. UV radiation-induced phosphorylation at Thr-366 mediates CDKN1A degradation. Post-translationally, acetylated. Deacetylation at Lys-48 enhances cytoplasmic localization and kinase activity in vitro. In terms of tissue distribution, widely expressed. Predominantly expressed in testis (at protein level). As to expression, expressed in adult brain and liver and absent from tissues derived from postnatal day 7.

Its subcellular location is the nucleus. It localises to the cytoplasm. The protein resides in the membrane. The protein localises to the mitochondrion. The catalysed reaction is L-seryl-[protein] + ATP = O-phospho-L-seryl-[protein] + ADP + H(+). It carries out the reaction L-threonyl-[protein] + ATP = O-phospho-L-threonyl-[protein] + ADP + H(+). Activated by forming a complex with STRAD (STRADA or STRADB) and CAB39/MO25 (CAB39/MO25alpha or CAB39L/MO25beta): STRADA (or STRADB)-binding promotes a conformational change of STK11/LKB1 in an active conformation, which is stabilized by CAB39/MO25alpha (or CAB39L/MO25beta) interacting with the STK11/LKB1 activation loop. Sequestration in the nucleus by NR4A1 prevents it from phosphorylating and activating cytoplasmic AMPK. Tumor suppressor serine/threonine-protein kinase that controls the activity of AMP-activated protein kinase (AMPK) family members, thereby playing a role in various processes such as cell metabolism, cell polarity, apoptosis and DNA damage response. Acts by phosphorylating the T-loop of AMPK family proteins, thus promoting their activity: phosphorylates PRKAA1, PRKAA2, BRSK1, BRSK2, MARK1, MARK2, MARK3, MARK4, NUAK1, NUAK2, SIK1, SIK2, SIK3 and SNRK but not MELK. Also phosphorylates non-AMPK family proteins such as STRADA, PTEN and possibly p53/TP53. Acts as a key upstream regulator of AMPK by mediating phosphorylation and activation of AMPK catalytic subunits PRKAA1 and PRKAA2 and thereby regulates processes including: inhibition of signaling pathways that promote cell growth and proliferation when energy levels are low, glucose homeostasis in liver, activation of autophagy when cells undergo nutrient deprivation, and B-cell differentiation in the germinal center in response to DNA damage. Also acts as a regulator of cellular polarity by remodeling the actin cytoskeleton. Required for cortical neuron polarization by mediating phosphorylation and activation of BRSK1 and BRSK2, leading to axon initiation and specification. Involved in DNA damage response: interacts with p53/TP53 and recruited to the CDKN1A/WAF1 promoter to participate in transcription activation. Able to phosphorylate p53/TP53; the relevance of such result in vivo is however unclear and phosphorylation may be indirect and mediated by downstream STK11/LKB1 kinase NUAK1. Also acts as a mediator of p53/TP53-dependent apoptosis via interaction with p53/TP53: translocates to the mitochondrion during apoptosis and regulates p53/TP53-dependent apoptosis pathways. Regulates UV radiation-induced DNA damage response mediated by CDKN1A. In association with NUAK1, phosphorylates CDKN1A in response to UV radiation and contributes to its degradation which is necessary for optimal DNA repair. Functionally, has a role in spermiogenesis. In Mus musculus (Mouse), this protein is Serine/threonine-protein kinase STK11.